The sequence spans 125 residues: Natriuretic peptide GNP1 (125 aa).

The first 25 residues, methionine 1–alanine 25, serve as a signal peptide directing secretion. Disordered regions lie at residues glycine 23 to lysine 78 and valine 105 to lysine 125. Positions histidine 26 to glutamate 85 are excised as a propeptide. Cysteine 94 and cysteine 110 are oxidised to a cystine.

It belongs to the natriuretic peptide family. Expressed by the venom gland.

The protein resides in the secreted. In terms of biological role, exhibits natriuretic and vasodepressor activity. Acts by stimulating cGMP. In Varanus varius (Lace monitor lizard), this protein is Natriuretic peptide GNP1.